We begin with the raw amino-acid sequence, 319 residues long: Pantothenate kinase (319 aa).

Residue 101–108 (GSVAVGKS) participates in ATP binding.

The protein belongs to the prokaryotic pantothenate kinase family.

Its subcellular location is the cytoplasm. The catalysed reaction is (R)-pantothenate + ATP = (R)-4'-phosphopantothenate + ADP + H(+). The protein operates within cofactor biosynthesis; coenzyme A biosynthesis; CoA from (R)-pantothenate: step 1/5. The chain is Pantothenate kinase from Clavibacter michiganensis subsp. michiganensis (strain NCPPB 382).